The sequence spans 518 residues: Wax ester synthase/diacylglycerol acyltransferase 6 (518 aa).

A compositionally biased stretch (basic and acidic residues) spans 1 to 17 (MEIKTRRDTSETSVRKD). A disordered region spans residues 1–29 (MEIKTRRDTSETSVRKDDEEEVEEEQPLS). The Cytoplasmic segment spans residues 1 to 213 (MEIKTRRDTS…LMAGSRGDSR (213 aa)). The Proton acceptor role is filled by His163. A disordered region spans residues 185-205 (PDELPSLPNQNRSSSRSSRLM). A helical membrane pass occupies residues 214 to 234 (FLWLVMVIWSAIMLVLNTVCD). Residues 235–518 (ALEFIATTMF…VQERDSRSLD (284 aa)) are Lumenal-facing. Residue Asn430 is glycosylated (N-linked (GlcNAc...) asparagine).

The protein in the N-terminal section; belongs to the long-chain O-acyltransferase family. As to expression, expressed in roots, stems, leaves, flowers and siliques.

It is found in the cell membrane. The protein resides in the endoplasmic reticulum membrane. It localises to the golgi apparatus membrane. The catalysed reaction is an acyl-CoA + a 1,2-diacyl-sn-glycerol = a triacyl-sn-glycerol + CoA. It carries out the reaction a long chain fatty alcohol + a fatty acyl-CoA = a wax ester + CoA. It participates in glycerolipid metabolism; triacylglycerol biosynthesis. It functions in the pathway lipid metabolism. Functionally, bifunctional wax ester synthase/diacylglycerol acyltransferase that uses acyl-CoAs with 16, 18 and 20 carbons as substrates, preferably in combination with 16:0ol alcohol. Involved in cuticular wax biosynthesis. This chain is Wax ester synthase/diacylglycerol acyltransferase 6, found in Arabidopsis thaliana (Mouse-ear cress).